Here is a 362-residue protein sequence, read N- to C-terminus: Probable secreted beta-glucosidase UTH1 (362 aa).

The signal sequence occupies residues 1–17 (MKLSALLALSASTAVLA).

Belongs to the SUN family.

It localises to the mitochondrion outer membrane. The protein resides in the secreted. It is found in the cell wall. Its function is as follows. Involved in aging, oxidative stress response, and in the regulation of mitochondrial biogenesis. Inactivation of UTH1 increases life span, leads to higher resistance to heat stress and to hydrogen peroxide, and increases sensitivity to the superoxide radical-generating drug paraquat and to copper. Also required for the selective autophagic degradation of mitochondria (mitophagy) in response to nitrogen starvation. May play a role in cell wall morphogenesis and septation. Involved in the remodeling of the cell wall during the various phases of yeast culture development and under various environmental conditions and plays a role in septation. Involved in cell sensitivity to boric acid. This is Probable secreted beta-glucosidase UTH1 (UTH1) from Saccharomyces cerevisiae (strain YJM789) (Baker's yeast).